Reading from the N-terminus, the 1028-residue chain is RNA cytidine acetyltransferase 2 (1028 aa).

Residues 286–295 and Arg-458 each bind ATP; that span reads GRGKSAALGL. The 184-residue stretch at 546–729 folds into the N-acetyltransferase domain; sequence VLLGPVDESQ…FAPFYVSQIP (184 aa). Acetyl-CoA contacts are provided by residues 617-619, 624-630, and Lys-717; these read IAV and MKMGYGS. A disordered region spans residues 982–1028; the sequence is SGIISVKSTKSENENGFDKSTKKRSSDKRSSSSSKSKSSKKRKSLKE. Residues 990–1001 show a composition bias toward basic and acidic residues; sequence TKSENENGFDKS. Residues 1018 to 1028 are compositionally biased toward basic residues; the sequence is KSSKKRKSLKE.

Belongs to the RNA cytidine acetyltransferase family. NAT10 subfamily.

Its subcellular location is the nucleus. The protein localises to the nucleolus. It carries out the reaction a cytidine in 18S rRNA + acetyl-CoA + ATP + H2O = an N(4)-acetylcytidine in 18S rRNA + ADP + phosphate + CoA + H(+). The catalysed reaction is a cytidine in tRNA + acetyl-CoA + ATP + H2O = an N(4)-acetylcytidine in tRNA + ADP + phosphate + CoA + H(+). RNA cytidine acetyltransferase with specificity toward both 18S rRNA and tRNAs. Catalyzes the formation of N(4)-acetylcytidine (ac4C) in 18S rRNA. Required for early nucleolar cleavages of precursor rRNA at sites A0, A1 and A2 during 18S rRNA synthesis. Catalyzes the formation of ac4C in serine and leucine tRNAs. Requires a tRNA-binding adapter protein for full tRNA acetyltransferase activity but not for 18S rRNA acetylation. In Arabidopsis thaliana (Mouse-ear cress), this protein is RNA cytidine acetyltransferase 2.